The following is a 136-amino-acid chain: Small ribosomal subunit protein uS9 (136 aa).

The protein belongs to the universal ribosomal protein uS9 family.

This Borreliella burgdorferi (strain ZS7) (Borrelia burgdorferi) protein is Small ribosomal subunit protein uS9.